Reading from the N-terminus, the 515-residue chain is Glucose-6-phosphate 1-dehydrogenase (515 aa).

Ala-2 is subject to N-acetylalanine. Ser-8 is subject to Phosphoserine. A Phosphothreonine modification is found at Thr-10. Phe-26 carries the phosphoserine modification. Residues 38 to 45 (GASGDLAK) and Arg-72 each bind NADP(+). Lys-89 carries the post-translational modification N6-acetyllysine. Residues Tyr-147 and Lys-171 each coordinate NADP(+). D-glucose 6-phosphate is bound by residues Lys-171, 201 to 205 (HYLGK), Glu-239, and Asp-258. Lys-171 is modified (N6-(2-hydroxyisobutyryl)lysine; alternate). Position 171 is an N6-acetyllysine; alternate (Lys-171). The active-site Proton acceptor is the His-263. NADP(+) is bound at residue Arg-357. Residues Lys-360 and Arg-365 each coordinate D-glucose 6-phosphate. NADP(+) is bound by residues Lys-366, Arg-370, and Arg-393. D-glucose 6-phosphate is bound at residue Gln-395. NADP(+) contacts are provided by residues 401-403 (YTK) and 421-423 (DLT). An N6-acetyllysine modification is found at Lys-403. Lys-432 carries the N6-acetyllysine modification. Arg-487 is an NADP(+) binding site. Lys-497 bears the N6-acetyllysine mark. Residues Tyr-503 and Trp-509 each contribute to the NADP(+) site. Residue Tyr-503 is modified to Phosphotyrosine.

This sequence belongs to the glucose-6-phosphate dehydrogenase family. As to quaternary structure, homotetramer; dimer of dimers. Interacts with SIRT2; the interaction is enhanced by H(2)O(2) treatment. Forms a ternary complex with ALDOB and TP53; this interaction is direct. ALDOB stabilizes the complex inhibiting G6PD activity and keeping oxidative pentose phosphate metabolism in check. Post-translationally, acetylated by ELP3 at Lys-403; acetylation inhibits its homodimerization and enzyme activity. Deacetylated by SIRT2 at Lys-403; deacetylation stimulates its enzyme activity. Isoform Long is found in lymphoblasts, granulocytes and sperm.

Its subcellular location is the cytoplasm. The protein localises to the cytosol. It is found in the membrane. The enzyme catalyses D-glucose 6-phosphate + NADP(+) = 6-phospho-D-glucono-1,5-lactone + NADPH + H(+). Its pathway is carbohydrate degradation; pentose phosphate pathway; D-ribulose 5-phosphate from D-glucose 6-phosphate (oxidative stage): step 1/3. Its function is as follows. Catalyzes the rate-limiting step of the oxidative pentose-phosphate pathway, which represents a route for the dissimilation of carbohydrates besides glycolysis. The main function of this enzyme is to provide reducing power (NADPH) and pentose phosphates for fatty acid and nucleic acid synthesis. The polypeptide is Glucose-6-phosphate 1-dehydrogenase (G6PD) (Homo sapiens (Human)).